A 275-amino-acid chain; its full sequence is 6-deoxy-6-sulfo-D-fructose transketolase subunit SqwG (275 aa).

It belongs to the transketolase family. As to quaternary structure, forms a complex with SqwH. It depends on thiamine diphosphate as a cofactor.

The enzyme catalyses 6-deoxy-6-sulfo-D-fructose + D-glyceraldehyde 3-phosphate = 4-deoxy-4-sulfo-D-erythrose + D-xylulose 5-phosphate. It catalyses the reaction 4-deoxy-4-sulfo-D-erythrulose + D-glyceraldehyde 3-phosphate = sulfoacetaldehyde + D-xylulose 5-phosphate. In terms of biological role, part of the sulfo-TK pathway, a D-sulfoquinovose degradation pathway that produces 2-hydroxyethane-1-sulfonate (isethionate). Catalyzes two steps of the pathway: the formation of 4-deoxy-4-sulfoerythrose (SE) and xylulose 5-phosphate from 6-deoxy-6-sulfo-D-fructose (SF) and glyceraldehyde 3-phosphate, and the formation of sulfoacetaldehyde (SA) and xylulose 5-phosphate from 4-deoxy-4-sulfo-D-erythrulose (SEu) and glyceraldehyde 3-phosphate. The protein is 6-deoxy-6-sulfo-D-fructose transketolase subunit SqwG of Clostridium sp. (strain MSTE9).